A 238-amino-acid polypeptide reads, in one-letter code: 14-3-3 protein 2 (238 aa).

The protein belongs to the 14-3-3 family.

Its function is as follows. Probable adapter protein. In Entamoeba histolytica (strain ATCC 30459 / HM-1:IMSS / ABRM), this protein is 14-3-3 protein 2.